Consider the following 123-residue polypeptide: uncharacterized protein (123 aa).

2 consecutive transmembrane segments (helical) span residues 55–77 (LLIH…STIL) and 92–114 (FFIN…TIVY).

The protein resides in the cell membrane. This is an uncharacterized protein from Pasteurella multocida (strain Pm70).